Here is a 94-residue protein sequence, read N- to C-terminus: uncharacterized protein (94 aa).

Positions 13–67 constitute an HTH cro/C1-type domain; that stretch reads IQESLDELNVSLREFARAMEIAPSTASRLLTGKAALTPEMAIKLSVVIGSSPQMW. Positions 24–43 form a DNA-binding region, H-T-H motif; that stretch reads LREFARAMEIAPSTASRLLT.

Belongs to the VapA/VapI family.

This is an uncharacterized protein from Escherichia coli (strain K12).